The primary structure comprises 382 residues: Beta-1,4-galactosyltransferase 6 (382 aa).

Residues 1-14 (MSVLRRMMRVSNRS) lie on the Cytoplasmic side of the membrane. Residues 15-35 (LLAFIFFFSLSSSCLYFIYVA) form a helical; Signal-anchor for type II membrane protein membrane-spanning segment. At 36–382 (PGIANTYLFM…MPELAPIEDY (347 aa)) the chain is on the lumenal side. 6 N-linked (GlcNAc...) asparagine glycosylation sites follow: Asn-71, Asn-75, Asn-83, Asn-84, Asn-99, and Asn-122. The cysteines at positions 108 and 152 are disulfide-linked. UDP-alpha-D-galactose is bound by residues 163-167 (PFRNR), 202-204 (FNR), 229-230 (VD), Tyr-258, and Trp-290. A disulfide bridge connects residues Cys-223 and Cys-242. Residue Asp-230 coordinates Mn(2+). 292 to 295 (GEDD) serves as a coordination point for N-acetyl-D-glucosamine. Asn-307 carries N-linked (GlcNAc...) asparagine glycosylation. His-323 contacts Mn(2+). Residue 323–324 (HH) coordinates UDP-alpha-D-galactose. Position 334 (Arg-334) interacts with N-acetyl-D-glucosamine. Asn-367 carries an N-linked (GlcNAc...) asparagine glycan.

Belongs to the glycosyltransferase 7 family. The cofactor is Mn(2+). Requires Mg(2+) as cofactor. As to expression, high expression in brain and adrenal gland, lower in liver, lung, colon and peripheral white blood cells.

The protein localises to the golgi apparatus. Its subcellular location is the golgi stack membrane. The catalysed reaction is a beta-D-glucosyl-(1&lt;-&gt;1')-N-acylsphing-4-enine + UDP-alpha-D-galactose = a beta-D-Gal-(1-&gt;4)-beta-D-Glc-(1&lt;-&gt;1)-Cer(d18:1(4E)) + UDP + H(+). It participates in protein modification; protein glycosylation. The protein operates within sphingolipid metabolism. Inhibited by EDTA. Functionally, catalyzes the synthesis of lactosylceramide (LacCer) via the transfer of galactose from UDP-galactose to glucosylceramide (GlcCer). LacCer is the starting point in the biosynthesis of all gangliosides (membrane-bound glycosphingolipids) which play pivotal roles in the CNS including neuronal maturation and axonal and myelin formation. The protein is Beta-1,4-galactosyltransferase 6 of Homo sapiens (Human).